Here is a 407-residue protein sequence, read N- to C-terminus: Putative ammonium transporter MTH_661 (407 aa).

Helical transmembrane passes span 9-29 (AWMLISTALVILMTVPGVAMF), 47-67 (FVSLGIVSLLWFLFGYGLIFG), 70-90 (VSGIIGSHQVGISLINLGSAS), 101-121 (FAIFQMTFAAITVALISGAVV), 129-149 (WILFIPLWFALVYVPVAHWVW), 162-182 (FAGGIVVHITSGIAALALALV), 196-216 (LGYSVIGTGLLWFGWFGFNAG), 226-246 (ANAMIVTNTSAAAGMIGWILM), 257-277 (LGALSGAVAGLASITPAAGFV), 279-299 (IGASIVTGLVAAVICYLAVSW), 312-332 (VFGIHGVSGIIGTLGVGLFAV), and 357-377 (IGVVTVTVYTFVVTYILAMLL).

Belongs to the ammonia transporter channel (TC 1.A.11.2) family.

It localises to the cell membrane. The chain is Putative ammonium transporter MTH_661 from Methanothermobacter thermautotrophicus (strain ATCC 29096 / DSM 1053 / JCM 10044 / NBRC 100330 / Delta H) (Methanobacterium thermoautotrophicum).